A 144-amino-acid polypeptide reads, in one-letter code: Large ribosomal subunit protein uL15 (144 aa).

The interval Met-1 to Gln-58 is disordered. Gly residues predominate over residues Arg-21–Gly-31.

It belongs to the universal ribosomal protein uL15 family. In terms of assembly, part of the 50S ribosomal subunit.

Functionally, binds to the 23S rRNA. The sequence is that of Large ribosomal subunit protein uL15 from Chromohalobacter salexigens (strain ATCC BAA-138 / DSM 3043 / CIP 106854 / NCIMB 13768 / 1H11).